The primary structure comprises 356 residues: Heparan sulfate 2-O-sulfotransferase 1 (356 aa).

The Cytoplasmic portion of the chain corresponds to 1-11 (MGLLRIMMPPK). The chain crosses the membrane as a helical; Signal-anchor for type II membrane protein span at residues 12–28 (LQLLAVVAFAVAMLFLE). A coiled-coil region spans residues 24–51 (MLFLENQIQKLEESRAKLERAIARHEVR). At 29-356 (NQIQKLEESR…FYEKIYPKSN (328 aa)) the chain is on the lumenal side. Lysine 83, threonine 84, alanine 85, serine 86, threonine 87, and serine 88 together coordinate adenosine 3',5'-bisphosphate. 2 N-linked (GlcNAc...) asparagine glycosylation sites follow: asparagine 108 and asparagine 127. Residues histidine 140 and histidine 142 contribute to the active site. Arginine 164 and serine 172 together coordinate adenosine 3',5'-bisphosphate. 2 cysteine pairs are disulfide-bonded: cysteine 201-cysteine 209 and cysteine 222-cysteine 228. Residues tyrosine 279, serine 285, threonine 290, and lysine 293 each coordinate adenosine 3',5'-bisphosphate.

Belongs to the sulfotransferase 3 family. Homotrimer. Interacts with the C5-epimerase GLCE. In terms of processing, N-glycosylated.

Its subcellular location is the golgi apparatus membrane. Its function is as follows. Catalyzes the transfer of a sulfo group from 3'-phospho-5'-adenylyl sulfate (PAPS) to the 2-OH position of iduronic acid (IdoA) or glucuronic acid (GlcA) within the heparan sulfate (HS) chain and participates in HS biosynthesis. Required for metanephric development of kidney formation, suggesting that 2-O-sulfation within HS is essential for signaling between ureteric bud and metanephric mesenchyme. This Cricetulus griseus (Chinese hamster) protein is Heparan sulfate 2-O-sulfotransferase 1.